Reading from the N-terminus, the 1409-residue chain is Protein three rows (1409 aa).

Positions 1052–1058 (VEPIRKQ) are separase cleavage-site. Disordered regions lie at residues 1260-1284 (PIGC…SDHV) and 1297-1409 (DDAA…RQRN). 2 stretches are compositionally biased toward low complexity: residues 1264–1273 (SNSSSSSSKS) and 1300–1310 (ASVSASTPAPS).

In terms of assembly, interacts with pim and Sse. Cleavage of thr contributes to inactivation of Sse.

The protein localises to the cytoplasm. Functionally, required specifically for chromosome disjunction during all mitoses; maternally provided protein is sufficient until mitosis 14 then zygotic protein is required. Involved in formation and/or maintenance of epithelial structures: bud extension during Malpighian tubule development, and foregut and hindgut morphogenesis. This chain is Protein three rows (thr), found in Drosophila pseudoobscura pseudoobscura (Fruit fly).